The following is a 626-amino-acid chain: MSLISAVPLASSCVSKSLISSVREHKALRRAIATLQMSRPGKSVAASTRMSSATAGCDDGVKRRIGDYHSNLWDDNFIQSLSSPYGASSYGDHADRLIGEVKEIFNSFSIADGELTSPVSDLLQQLWMVDNVERLGIDRHFQTEIKVALDNVYRYWSEKGIGCGRDSASTDLNTTALGFRIFRLHGYTVSSDAFEHFKDQMGQFTASANDTELQTRSVFNLFRASLIAFPEEKVLEEAEKFAAAYLKAALQTLPVSGLSREIKYVFDYRWHSNLPRLEARSYIDILADNTISGTPDANTKKLLELAKLEFNIFHSLQQKELQCLWRWWKEWGCPELTFIRHRYVEFYTLVSGIDMVPEHATFRLSFVKTCHLITILDDMYDTFGTIDELRLFTAAVKRWDPSATECLPEYMKGVYMVLYETVNEMAKEAQKSQGRDTLGYVRQALEDYIGSYLKEAEWIATGYVPTFQEYFENGKLSSGHRIATLQPILTLSIPFPHHILQEIDFPSKFNDYACSILRLRGDTRCYKADSARGEEASCTSCYMKENLGSTQEDALNHINGMIEDLIKKLNWEFLRPDNNAPISSKKHAFNISRGLHHFYNYRDGYSVASNETKDLVIKTVLEPVLM.

Residues 1-45 (MSLISAVPLASSCVSKSLISSVREHKALRRAIATLQMSRPGKSVA) constitute a chloroplast transit peptide. Residues Asp377, Asp381, and Asp529 each contribute to the Mg(2+) site. Positions 377-381 (DDMYD) match the DDXXD motif motif.

Belongs to the terpene synthase family. Tpsd subfamily. It depends on Mg(2+) as a cofactor. The cofactor is Mn(2+).

The protein resides in the plastid. It localises to the chloroplast. It carries out the reaction (2E)-geranyl diphosphate = (+)-car-3-ene + diphosphate. The enzyme catalyses (2E)-geranyl diphosphate = terpinolene + diphosphate. The protein operates within terpene metabolism; oleoresin biosynthesis. It functions in the pathway secondary metabolite biosynthesis; terpenoid biosynthesis. Functionally, monoterpene synthase (TPS) involved in the biosynthesis of monoterpene natural products included in conifer oleoresin secretions and volatile emissions; these compounds contribute to biotic and abiotic stress defense against herbivores and pathogens. Catalyzes the conversion of (2E)-geranyl diphosphate (GPP) to (+)-3-carene and, to a lower extent, to terpinolene. In Pinus banksiana (Jack pine), this protein is (+)-3-carene synthase 1, chloroplastic.